The chain runs to 122 residues: Sarcocystatin-A (122 aa).

The first 20 residues, 1-20 (MKYVLILCVITLATVAYAQP), serve as a signal peptide directing secretion. Gln-21 is modified (pyrrolidone carboxylic acid). A Secondary area of contact motif is present at residues 67-71 (QVVSG).

The protein belongs to the cystatin family.

Its function is as follows. Selectively inhibits the activity of cysteine proteinase of hemocytes, protecting developing adult tissue in pupae from attack by the proteinase. The chain is Sarcocystatin-A from Sarcophaga peregrina (Flesh fly).